The chain runs to 518 residues: MASTFNPRECKLSKEEGQNYGFFLRIEKDTEGHLVRVIEKGSPAEKAGLQDGDRVLRINGVFVDKEEHMQVVDLVRKSGNAVTLLVLDGNSYEKAVKKQVDLKELGQSRQEADLRDENVAPVMNGGVETWTQPRLCYLEKQGNSYGFSLKTVQGKKGVYMTDIIPQSVAMKAGVLADDHLIEVNGENVEDASHEEVVEKVKKSGNRIVFLLVDKETEKRHSEQKIEFRREAASLKLLPHQPRIVEMKKGSSGYGFYLKAGPEQRGQIIKDIDSGSPAEAAGLKNNDLVIAVNGKSVEALDHDGVVELIKKGGDQTSLLVVDKEADSMYRLAHFSPFLYYQSQELPNGSVTEVAAPTPVPPEVSSPDPTEEVEDHKPKLCRLDKGENGYGFHLNAIRGLPGSFVKEVQKGSPADLAGLEDEDIIIEVNGVNVLDEPYEKVVDRIQSSGDNVTLLVCGKKAYEYFQAKKIPIVSSMALPLAIPADSQGMLAELEYNLHEAKERAHSTASNSSSNSEDTEL.

A PDZ 1 domain is found at Glu-9–Asn-90. Phosphoserine occurs at positions 108, 148, 192, 250, 334, and 348. 2 consecutive PDZ domains span residues Leu-135–Glu-215 and Ile-243–Glu-323. A PDZ 4 domain is found at Leu-378–Lys-458. Phosphothreonine is present on Thr-451. A disordered region spans residues Lys-499–Leu-518. Phosphoserine occurs at positions 507, 509, 510, 511, and 513. Low complexity predominate over residues Ser-507–Leu-518.

It belongs to the NHER family. Interacts with PDZK1IP1 and ABCC2. Interacts (via PDZ domains 1 and 3) with SCARB1 (C-terminal domain). Forms a heterodimeric complex with NHERF1. Interacts with AKAP2, BCR, CFTR, SLCO1A1, SLC22A12, SLC22A4, SLC22A5, NHERF2 and SLC17A1. Component of a complex, composed of PDZK1, SYNGAP1, KLHL17 and NMDA receptors. Interacts (via PDZ1 domain) directly with KLHL17; the interaction is important for integrity of actin cytoskeleton structures in neurons. Interacts (via C-terminal PDZ domain) with SLC9A3 (via C-terminal domain). Interacts (via the first PDZ domain) with PTGIR (via non-isoprenylated C-terminus). Binds to the C-terminal region of SLC26A3. Interacts (via C-terminal PDZ domain) with SLC26A6 (via C-terminal domain). Interacts (via PDZ domains 1 and 3) with SLC5A8 (via PDZ-binding motif); interaction increases nicotinate transport activity of SLC5A8. Highly expressed in the brush border membrane of duodenal and ileal mucosa.

The protein resides in the membrane. The protein localises to the cell membrane. In terms of biological role, a scaffold protein that connects plasma membrane proteins and regulatory components, regulating their surface expression in epithelial cells apical domains. May be involved in the coordination of a diverse range of regulatory processes for ion transport and second messenger cascades. In complex with NHERF1, may cluster proteins that are functionally dependent in a mutual fashion and modulate the trafficking and the activity of the associated membrane proteins. May play a role in the cellular mechanisms associated with multidrug resistance through its interaction with ABCC2 and PDZK1IP1. May potentiate the CFTR chloride channel activity. Required for normal cell-surface expression of SCARB1. Plays a role in maintaining normal plasma cholesterol levels via its effects on SCARB1. Plays a role in the normal localization and function of the chloride-anion exchanger SLC26A6 to the plasma membrane in the brush border of the proximal tubule of the kidney. May be involved in the regulation of proximal tubular Na(+)-dependent inorganic phosphate cotransport therefore playing an important role in tubule function. The sequence is that of Na(+)/H(+) exchange regulatory cofactor NHE-RF3 (PDZK1) from Oryctolagus cuniculus (Rabbit).